The primary structure comprises 243 residues: Ribosomal RNA small subunit methyltransferase G (243 aa).

S-adenosyl-L-methionine is bound by residues G82, F87, 133–134, and R152; that span reads AE.

This sequence belongs to the methyltransferase superfamily. RNA methyltransferase RsmG family.

Its subcellular location is the cytoplasm. Functionally, specifically methylates the N7 position of a guanine in 16S rRNA. This chain is Ribosomal RNA small subunit methyltransferase G, found in Clostridium novyi (strain NT).